The following is a 303-amino-acid chain: N-acetyl-D-glucosamine kinase (303 aa).

ATP is bound by residues 4–11 (GFDIGGTK) and 133–140 (GVGGGLVL). Positions 157, 177, 179, and 184 each coordinate Zn(2+).

The protein belongs to the ROK (NagC/XylR) family. NagK subfamily.

The enzyme catalyses N-acetyl-D-glucosamine + ATP = N-acetyl-D-glucosamine 6-phosphate + ADP + H(+). The protein operates within cell wall biogenesis; peptidoglycan recycling. Its function is as follows. Catalyzes the phosphorylation of N-acetyl-D-glucosamine (GlcNAc) derived from cell-wall degradation, yielding GlcNAc-6-P. This Salmonella dublin (strain CT_02021853) protein is N-acetyl-D-glucosamine kinase.